The following is a 298-amino-acid chain: ATP phosphoribosyltransferase (298 aa).

It belongs to the ATP phosphoribosyltransferase family. Long subfamily. Requires Mg(2+) as cofactor.

The protein resides in the cytoplasm. It catalyses the reaction 1-(5-phospho-beta-D-ribosyl)-ATP + diphosphate = 5-phospho-alpha-D-ribose 1-diphosphate + ATP. Its pathway is amino-acid biosynthesis; L-histidine biosynthesis; L-histidine from 5-phospho-alpha-D-ribose 1-diphosphate: step 1/9. Its activity is regulated as follows. Feedback inhibited by histidine. In terms of biological role, catalyzes the condensation of ATP and 5-phosphoribose 1-diphosphate to form N'-(5'-phosphoribosyl)-ATP (PR-ATP). Has a crucial role in the pathway because the rate of histidine biosynthesis seems to be controlled primarily by regulation of HisG enzymatic activity. The sequence is that of ATP phosphoribosyltransferase from Aliivibrio salmonicida (strain LFI1238) (Vibrio salmonicida (strain LFI1238)).